The chain runs to 650 residues: Amyloid beta precursor like protein 1 (650 aa).

The N-terminal stretch at 1-38 is a signal peptide; it reads MGPASPAARGLSRRPGQPPLPLLLPLLLLLLRAQPAIG. At 39–580 the chain is on the extracellular side; it reads SLAGGSPGAA…APAGTGVSRE (542 aa). Positions 50–146 are GFLD subdomain; that stretch reads APGSAQVAGL…PFRCLPGEFV (97 aa). Positions 50-212 constitute an E1 domain; that stretch reads APGSAQVAGL…RGVEYVCCPP (163 aa). Intrachain disulfides connect Cys60/Cys84, Cys95/Cys140, Cys120/Cys128, Cys156/Cys210, Cys167/Cys197, and Cys181/Cys209. The cuBD subdomain stretch occupies residues 154–212; sequence EGCRFLHQERMDQCESSTRRHQEAQEACSSQGLILHGSGMLLPCGSDRFRGVEYVCCPP. His174 contacts Cu(2+). Positions 206, 209, and 210 each coordinate Zn(2+). Positions 214–287 are disordered; that stretch reads GTPDPSGTAV…LAVVGKVTPT (74 aa). Thr215 carries an O-linked (GalNAc...) threonine glycan. A glycan (O-linked (GalNAc...) serine) is linked at Ser227. O-linked (GalNAc...) threonine glycosylation is present at Thr228. Positions 285–305 are O-glycosylated at three sites; sequence TPTPRPTDGVDIYFGMPGEIS. The E2 domain occupies 293–484; it reads GVDIYFGMPG…QELRPQIQEL (192 aa). Heparin-binding regions lie at residues 310-342 and 410-441; these read FLRA…SKNL and LLAL…DPEK. The N-linked (GlcNAc...) asparagine glycan is linked to Asn337. Residues 442 to 459 are collagen-binding; that stretch reads AQQMRFQVHTHLQVIEER. A glycan (N-linked (GlcNAc...) asparagine) is linked at Asn461. Positions 492–546 are disordered; it reads PSELEAPAPGGSSEDKGGLQPPDSKDDTPMTLPKGSTEQDAASPEKEKMNPLEQY. Basic and acidic residues-rich tracts occupy residues 504-519 and 534-546; these read SEDK…KDDT and SPEK…LEQY. Asn551 carries N-linked (GlcNAc...) asparagine glycosylation. His561 provides a ligand contact to Cu(2+). His561 lines the Zn(2+) pocket. Residues 581 to 603 form a helical membrane-spanning segment; sequence AVSGLLIMGAGGGSLIVLSMLLL. The short motif at 604 to 615 is the Basolateral sorting signal element; sequence RRKKPYGAISHG. The Cytoplasmic portion of the chain corresponds to 604–650; the sequence is RRKKPYGAISHGVVEVDPMLTLEEQQLRELQRHGYENPTYRFLEERP. An interaction with DAB1 region spans residues 632–649; sequence ELQRHGYENPTYRFLEER. The tract at residues 636–650 is interaction with DAB2; sequence HGYENPTYRFLEERP. A Clathrin-binding motif is present at residues 640-643; it reads NPTY. The short motif at 640-643 is the NPXY motif; contains endocytosis signal element; it reads NPTY.

It belongs to the APP family. In terms of assembly, monomer and homodimer. Heparin binding promotes homodimerization. Binds, via its C-terminus, to the PID domain of several cytoplasmic proteins, including APBB and APBA family members, MAPK8IP1 and DAB1. Binding to Dab1 inhibits its serine phosphorylation. Interacts with CPEB1. Interacts (via NPXY motif) with DAB2 (via PID domain); the interaction is impaired by tyrosine phosphorylation of the NPXY motif. Interacts (via NPXY motif) with DAB1. Post-translationally, proteolytically cleaved by caspases during neuronal apoptosis. Cleaved, in vitro, at Asp-620 by caspase-3. N- and O-glycosylated. O-glycosylation with core 1 or possibly core 8 glycans. Glycosylation on Ser-227 is the preferred site to Thr-228. Expressed in the cerebral cortex where it is localized to the postsynaptic density (PSD).

Its subcellular location is the cell membrane. The protein localises to the cytoplasm. Functionally, may play a role in postsynaptic function. The C-terminal gamma-secretase processed fragment, ALID1, activates transcription activation through APBB1 (Fe65) binding. Couples to JIP signal transduction through C-terminal binding. May interact with cellular G-protein signaling pathways. Can regulate neurite outgrowth through binding to components of the extracellular matrix such as heparin and collagen I. Its function is as follows. The gamma-CTF peptide, C30, is a potent enhancer of neuronal apoptosis. The chain is Amyloid beta precursor like protein 1 (APLP1) from Homo sapiens (Human).